The sequence spans 500 residues: Probable cytosol aminopeptidase (500 aa).

Positions 261 and 266 each coordinate Mn(2+). K273 is a catalytic residue. Positions 284, 343, and 345 each coordinate Mn(2+). R347 is a catalytic residue.

Belongs to the peptidase M17 family. The cofactor is Mn(2+).

The protein resides in the cytoplasm. It carries out the reaction Release of an N-terminal amino acid, Xaa-|-Yaa-, in which Xaa is preferably Leu, but may be other amino acids including Pro although not Arg or Lys, and Yaa may be Pro. Amino acid amides and methyl esters are also readily hydrolyzed, but rates on arylamides are exceedingly low.. The catalysed reaction is Release of an N-terminal amino acid, preferentially leucine, but not glutamic or aspartic acids.. Presumably involved in the processing and regular turnover of intracellular proteins. Catalyzes the removal of unsubstituted N-terminal amino acids from various peptides. This chain is Probable cytosol aminopeptidase, found in Wolbachia pipientis wMel.